The chain runs to 563 residues: Vacuolar protein sorting-associated protein 45 (563 aa).

It belongs to the STXBP/unc-18/SEC1 family.

Its subcellular location is the golgi apparatus membrane. It localises to the endosome membrane. In terms of biological role, may play a role in vesicle-mediated protein trafficking from the Golgi stack through the trans-Golgi network. The chain is Vacuolar protein sorting-associated protein 45 (vps45) from Dictyostelium discoideum (Social amoeba).